The sequence spans 226 residues: MGIRAIVVDTAGTTTDLNFIQDVLFPYSVKALPDFLEQNQHNVLVENCICDTRDIALEPDADLARVTEILQQWVSEDRKATPLKTLQGLIWKQGYAHGEFKGHIFPDFIEAVKRFSEQNLRIYSFSSGSVDAQKLLFSHSDGGDLTEMFNGHFDTRTGNKLDKQAYCNILNTISLSPKQVLFVSDVIEELKAADAAGMMTCQMVRDSKQRTGEFRTISSFDELLIE.

This sequence belongs to the HAD-like hydrolase superfamily. MasA/MtnC family. In terms of assembly, monomer. The cofactor is Mg(2+).

The catalysed reaction is 5-methylsulfanyl-2,3-dioxopentyl phosphate + H2O = 1,2-dihydroxy-5-(methylsulfanyl)pent-1-en-3-one + phosphate. It participates in amino-acid biosynthesis; L-methionine biosynthesis via salvage pathway; L-methionine from S-methyl-5-thio-alpha-D-ribose 1-phosphate: step 3/6. The protein operates within amino-acid biosynthesis; L-methionine biosynthesis via salvage pathway; L-methionine from S-methyl-5-thio-alpha-D-ribose 1-phosphate: step 4/6. In terms of biological role, bifunctional enzyme that catalyzes the enolization of 2,3-diketo-5-methylthiopentyl-1-phosphate (DK-MTP-1-P) into the intermediate 2-hydroxy-3-keto-5-methylthiopentenyl-1-phosphate (HK-MTPenyl-1-P), which is then dephosphorylated to form the acireductone 1,2-dihydroxy-3-keto-5-methylthiopentene (DHK-MTPene). This Shewanella baltica (strain OS195) protein is Enolase-phosphatase E1.